A 639-amino-acid polypeptide reads, in one-letter code: Immunoglobulin-like domain-containing receptor 2 (639 aa).

Residues 1–20 form the signal peptide; that stretch reads MDRVLLRWISLFWLTAMVEG. One can recognise an Ig-like V-type domain in the interval 21-162; that stretch reads LQVTVPDKKK…LEGKNEDSVE (142 aa). The Lumenal segment spans residues 21 to 186; sequence LQVTVPDKKK…PSFAVEIMPE (166 aa). Cys-42 and Cys-145 are oxidised to a cystine. The chain crosses the membrane as a helical span at residues 187-207; that stretch reads WVFVGLVLLGVFLFFVLVGIC. At 208-639 the chain is on the cytoplasmic side; sequence WCQCCPHSCC…DFPTRMSLVV (432 aa). Disordered stretches follow at residues 273–295, 374–415, and 437–639; these read LMDKPHPPPLAPSDSTGGSHSVR, WSGV…MLSR, and YGQR…SLVV. Basic and acidic residues-rich tracts occupy residues 393–414 and 442–464; these read YNKEDRESFRHSQPRSKSEMLS and RRADGNSHEARGGSRFERSESRA. Ser-473 is modified (phosphoserine). Positions 483-493 are enriched in basic and acidic residues; sequence RSREPLTDADR. An Omega-N-methylarginine modification is found at Arg-544. Ser-579 is modified (phosphoserine). Positions 606–617 are enriched in basic and acidic residues; that stretch reads RGRDLPYHSNSE.

It belongs to the immunoglobulin superfamily. LISCH7 family. Interacts with MARVELD2 and OCLN. Interacts with P4HB AND HSPA5; the interaction with HSPA5 stabilizes ILDR2 expression. Interacts (via C-terminus) with TRA2A, TRA2B and SRSF1. Expressed in testis, brain, pituitary, colon, heart, nerves, prostate, esophagus, lung liver and small intestine. Highly expressed in macrophages, also expressed in monocytes and at low levels in NK and NKT cells (at protein level).

Its subcellular location is the endoplasmic reticulum membrane. The protein resides in the cell junction. It is found in the tight junction. The protein localises to the nucleus. May be involved in ER stress pathways with effects on lipid homeostasis and insulin secretion. With ILDR1 and LSR, involved in the maintain of the epithelial barrier function through the recruitment of MARVELD2/tricellulin to tricellular tight junctions. Also functions as a B7-like protein family member expressed on immune cells and inflamed tissue and with T-cell inhibitory activity. In the inner ear, may regulate alternative pre-mRNA splicing via binding to TRA2A, TRA2B and SRSF1. The chain is Immunoglobulin-like domain-containing receptor 2 from Homo sapiens (Human).